The sequence spans 297 residues: Phosphatidylserine decarboxylase proenzyme (297 aa).

Catalysis depends on charge relay system; for autoendoproteolytic cleavage activity residues Asp112, His168, and Ser255. The Schiff-base intermediate with substrate; via pyruvic acid; for decarboxylase activity role is filled by Ser255. Ser255 carries the post-translational modification Pyruvic acid (Ser); by autocatalysis.

Belongs to the phosphatidylserine decarboxylase family. PSD-B subfamily. Prokaryotic type II sub-subfamily. As to quaternary structure, heterodimer of a large membrane-associated beta subunit and a small pyruvoyl-containing alpha subunit. Requires pyruvate as cofactor. Post-translationally, is synthesized initially as an inactive proenzyme. Formation of the active enzyme involves a self-maturation process in which the active site pyruvoyl group is generated from an internal serine residue via an autocatalytic post-translational modification. Two non-identical subunits are generated from the proenzyme in this reaction, and the pyruvate is formed at the N-terminus of the alpha chain, which is derived from the carboxyl end of the proenzyme. The autoendoproteolytic cleavage occurs by a canonical serine protease mechanism, in which the side chain hydroxyl group of the serine supplies its oxygen atom to form the C-terminus of the beta chain, while the remainder of the serine residue undergoes an oxidative deamination to produce ammonia and the pyruvoyl prosthetic group on the alpha chain. During this reaction, the Ser that is part of the protease active site of the proenzyme becomes the pyruvoyl prosthetic group, which constitutes an essential element of the active site of the mature decarboxylase.

The protein localises to the cell membrane. It catalyses the reaction a 1,2-diacyl-sn-glycero-3-phospho-L-serine + H(+) = a 1,2-diacyl-sn-glycero-3-phosphoethanolamine + CO2. Its pathway is phospholipid metabolism; phosphatidylethanolamine biosynthesis; phosphatidylethanolamine from CDP-diacylglycerol: step 2/2. Its function is as follows. Catalyzes the formation of phosphatidylethanolamine (PtdEtn) from phosphatidylserine (PtdSer). The polypeptide is Phosphatidylserine decarboxylase proenzyme (Clostridium tetani (strain Massachusetts / E88)).